A 257-amino-acid chain; its full sequence is Snake venom serine protease KN2 (257 aa).

Positions 1-18 (MVLIRVLANLLILQLSYA) are cleaved as a signal peptide. A propeptide spanning residues 19-24 (QKSSEL) is cleaved from the precursor. The 224-residue stretch at 25 to 248 (VIGGHPCNIN…HLDWIKSIIA (224 aa)) folds into the Peptidase S1 domain. 6 disulfide bridges follow: C31-C162, C49-C65, C97-C255, C141-C209, C173-C188, and C199-C224. Catalysis depends on charge relay system residues H64 and D109. 2 N-linked (GlcNAc...) asparagine glycosylation sites follow: N120 and N121. The active-site Charge relay system is the S203.

Belongs to the peptidase S1 family. Snake venom subfamily. As to quaternary structure, monomer. As to expression, expressed by the venom gland.

It localises to the secreted. In terms of biological role, snake venom serine protease that may act in the hemostasis system of the prey. This chain is Snake venom serine protease KN2, found in Trimeresurus stejnegeri (Chinese green tree viper).